A 405-amino-acid chain; its full sequence is CMP-sialic acid transporter 4 (405 aa).

The Cytoplasmic segment spans residues 1–43 (MQRNGVMECSVCHSKVVAPSPRSVSRAYDKHRSKISSKYRALN). A helical transmembrane segment spans residues 44–64 (FLLVSGDCILVGLQPILVFMS). Residues 65-74 (KVDGKFQFSP) lie on the Lumenal side of the membrane. Residues 75 to 95 (ISVNFLTEVTKVIFAIVMLII) form a helical membrane-spanning segment. At 96-121 (QSRKQKVGEKPLLSLSTFVQAARNNA) the chain is on the cytoplasmic side. The chain crosses the membrane as a helical span at residues 122–142 (LLAVPALLYAINNYLKFIMQL). Residue tyrosine 143 is a topological domain, lumenal. Residues 144–164 (FSPATVKMLSNLKVLVIAILL) traverse the membrane as a helical segment. At 165–171 (KFIMRRK) the chain is on the cytoplasmic side. Residues 172–192 (FSIIQWEALALLLIGISVNQL) traverse the membrane as a helical segment. The Lumenal segment spans residues 193 to 203 (SSIPDGTKSFG). The helical transmembrane segment at 204–224 (LAVTTIAYIYTLIFVTVPSLA) threads the bilayer. The Cytoplasmic segment spans residues 225–244 (SVYNEYALKSQFDTSIYLQN). The helical transmembrane segment at 245-265 (LFLYGYGAIFNFLGILGTVIF) threads the bilayer. At 266 to 281 (QGPESFDILRGHSRAT) the chain is on the lumenal side. The helical transmembrane segment at 282–302 (MFLICNNAAQGILSSFFFKYA) threads the bilayer. The Cytoplasmic portion of the chain corresponds to 303 to 322 (DTILKKYSSTVATIFTGLAS). The chain crosses the membrane as a helical span at residues 323-343 (AAFLGHTLTVNFLLGISIVFI). The Lumenal portion of the chain corresponds to 344 to 405 (SMHQFFSPLA…TDERKPLLPI (62 aa)).

This sequence belongs to the nucleotide-sugar transporter family. CMP-Sialate:CMP antiporter (TC 2.A.7.12) subfamily.

It localises to the golgi apparatus membrane. Its function is as follows. Sugar transporter involved in the transport of CMP-sialic acid from the cytoplasm into the Golgi. May transport important nucleotide sugars such as CMP-Kdo (2-keto-3-deoxy-D-manno-octulosonic acid) in physiological conditions. The sequence is that of CMP-sialic acid transporter 4 from Oryza sativa subsp. japonica (Rice).